The chain runs to 307 residues: Coproporphyrin III ferrochelatase (307 aa).

Fe-coproporphyrin III is bound by residues Tyr-12, Arg-29, 45-46 (RY), Ser-53, and Tyr-124. Fe(2+) is bound by residues His-181 and Glu-263.

It belongs to the ferrochelatase family.

It is found in the cytoplasm. The catalysed reaction is Fe-coproporphyrin III + 2 H(+) = coproporphyrin III + Fe(2+). The protein operates within porphyrin-containing compound metabolism; protoheme biosynthesis. Its function is as follows. Involved in coproporphyrin-dependent heme b biosynthesis. Catalyzes the insertion of ferrous iron into coproporphyrin III to form Fe-coproporphyrin III. This Staphylococcus aureus (strain COL) protein is Coproporphyrin III ferrochelatase.